We begin with the raw amino-acid sequence, 269 residues long: Undecaprenyl-diphosphatase (269 aa).

Transmembrane regions (helical) follow at residues 40 to 59 (GITFDVALHLGTLIALALYF), 87 to 107 (WYIIAGCVPAAIVGKTLEEPI), 116 to 136 (AIIAAFLIGFGLLLALADTLG), 160 to 180 (ALLPGVSRSGITITAALFLGF), 188 to 208 (FSFLLSLPIVAGAALLKVGHL), 220 to 240 (PLLIGVGVSAVFGYVSVALLL), and 247 to 267 (SLYPFVWYRLLAGAGVLLFIF).

The protein belongs to the UppP family.

Its subcellular location is the cell inner membrane. The enzyme catalyses di-trans,octa-cis-undecaprenyl diphosphate + H2O = di-trans,octa-cis-undecaprenyl phosphate + phosphate + H(+). Its function is as follows. Catalyzes the dephosphorylation of undecaprenyl diphosphate (UPP). Confers resistance to bacitracin. The polypeptide is Undecaprenyl-diphosphatase (Geobacter metallireducens (strain ATCC 53774 / DSM 7210 / GS-15)).